Here is a 441-residue protein sequence, read N- to C-terminus: MTHDNIDILVVDDDISHCTILQALLRGWGYNVALANSGRQALEQVREQVFDLVLCDVRMAEMDGIATLKEIKALNPAIPVLIMTAYSSVETAVEALKTGALDYLIKPLDFDNLQATLEKALAHTHSIDAETPAVTASQFGMVGKSPAMQHLLSEIALVAPSEATVLIHGDSGTGKELVARAIHASSARSEKPLVTLNCAALNESLLESELFGHEKGAFTGADKRREGRFVEADGGTLFLDEIGDISPMMQVRLLRAIQEREVQRVGSNQIISVDVRLIAATHRDLAAEVNAGRFRQDLYYRLNVVAIEVPSLRQRREDIPLLAGHFLQRFAERNRKAVKGFTPQAMDLLIHYDWPGNIRELENAVERAVVLLTGEYISERELPLAIASTPIPLGQSQDIQPLVEVEKEVILAALEKTGGNKTEAARQLGITRKTLLAKLSR.

The Response regulatory domain occupies 7 to 121 (DILVVDDDIS…NLQATLEKAL (115 aa)). Asp-56 is subject to 4-aspartylphosphate. Residues 141-370 (MVGKSPAMQH…LENAVERAVV (230 aa)) enclose the Sigma-54 factor interaction domain. ATP contacts are provided by Gly-172, Thr-173, Arg-329, and Arg-359. The segment at residues 421-440 (KTEAARQLGITRKTLLAKLS) is a DNA-binding region (H-T-H motif).

Monomer. In terms of processing, phosphorylated by ZraS.

It is found in the cytoplasm. Its activity is regulated as follows. Activity of the ZraS/ZraR two-component system is repressed by the zinc-bound form of ZraP, which probably interacts with the periplasmic region of ZraS. In terms of biological role, part of the Zra signaling pathway, an envelope stress response (ESR) system composed of the periplasmic accessory protein ZraP, the histidine kinase ZraS and the transcriptional regulator ZraR. The ZraPSR system contributes to antibiotic resistance and is important for membrane integrity in the presence of membrane-targeting biocides. ZraR is a member of the two-component regulatory system ZraS/ZraR. When activated by ZraS, acts in conjunction with sigma-54 to regulate the expression of zraP in the presence of high Zn(2+) or Pb(2+) concentrations. Also positively autoregulates the expression of the zraSR operon. Binds to a region within the zraP-zraSR intergenic region that is characterized by two inverted repeats separated by a 14 bp spacer. In addition, controls a regulon of genes of diverse functions that may be critical to maintain envelope integrity and cell survival under stressful conditions. The system has no direct role in zinc or copper resistance. The protein is Transcriptional regulatory protein ZraR of Escherichia coli (strain K12).